The chain runs to 220 residues: Probable nicotinate-nucleotide adenylyltransferase (220 aa).

Belongs to the NadD family.

The catalysed reaction is nicotinate beta-D-ribonucleotide + ATP + H(+) = deamido-NAD(+) + diphosphate. The protein operates within cofactor biosynthesis; NAD(+) biosynthesis; deamido-NAD(+) from nicotinate D-ribonucleotide: step 1/1. Its function is as follows. Catalyzes the reversible adenylation of nicotinate mononucleotide (NaMN) to nicotinic acid adenine dinucleotide (NaAD). This Laribacter hongkongensis (strain HLHK9) protein is Probable nicotinate-nucleotide adenylyltransferase.